A 166-amino-acid polypeptide reads, in one-letter code: Small ribosomal subunit protein uS5 (166 aa).

One can recognise an S5 DRBM domain in the interval 12-75 (YIEKLVQVNR…EAARRNMIQV (64 aa)).

It belongs to the universal ribosomal protein uS5 family. As to quaternary structure, part of the 30S ribosomal subunit. Contacts proteins S4 and S8.

With S4 and S12 plays an important role in translational accuracy. In terms of biological role, located at the back of the 30S subunit body where it stabilizes the conformation of the head with respect to the body. The sequence is that of Small ribosomal subunit protein uS5 from Pseudomonas fluorescens (strain SBW25).